The following is a 185-amino-acid chain: Pro-adrenomedullin (185 aa).

The N-terminal stretch at 1 to 21 is a signal peptide; sequence MKLVSVALMYLGSLAFLGADT. Arg41 bears the Arginine amide mark. A propeptide spanning residues 45-92 is cleaved from the precursor; it reads ELRMSSSYPTGLADVKAGPAQTLIRPQDMKGASRSPEDSSPDAARIRV. The interval 60 to 87 is disordered; sequence KAGPAQTLIRPQDMKGASRSPEDSSPDA. A disulfide bridge connects residues Cys110 and Cys115. Residues 133–185 form a disordered region; it reads DNVAPRSKISPQGYGRRRRRSLPEAGPGRTLVSSKPQAHGAPAPPSGSAPHFL. A Tyrosine amide modification is found at Tyr146. Positions 148 to 185 are cleaved as a propeptide — preproAM C-terminal fragment; that stretch reads RRRRRSLPEAGPGRTLVSSKPQAHGAPAPPSGSAPHFL.

It belongs to the adrenomedullin family. In terms of tissue distribution, highest levels found in pheochromocytoma and adrenal medulla. Also found in lung, ventricle and kidney tissues.

The protein localises to the secreted. Its function is as follows. Adrenomedullin/ADM and proadrenomedullin N-20 terminal peptide/PAMP are peptide hormones that act as potent hypotensive and vasodilatator agents. Numerous actions have been reported most related to the physiologic control of fluid and electrolyte homeostasis. In the kidney, ADM is diuretic and natriuretic, and both ADM and PAMP inhibit aldosterone secretion by direct adrenal actions. In pituitary gland, both peptides at physiologically relevant doses inhibit basal ACTH secretion. Both peptides appear to act in brain and pituitary gland to facilitate the loss of plasma volume, actions which complement their hypotensive effects in blood vessels. Functionally, ADM function is mediated by the CALCRL-RAMP2 and CALCRL-RAMP3 receptor complexes with ADM showing the highest potency for the CALCRL-RAMP2 complex. The polypeptide is Pro-adrenomedullin (Homo sapiens (Human)).